The following is a 106-amino-acid chain: YcgL domain-containing protein HCH_02617 (106 aa).

The YcgL domain occupies 6–90 (RLISIFRSSK…VQDDYMMDVV (85 aa)).

This is YcgL domain-containing protein HCH_02617 from Hahella chejuensis (strain KCTC 2396).